Here is a 359-residue protein sequence, read N- to C-terminus: Peptide chain release factor 1 (359 aa).

Q236 is modified (N5-methylglutamine).

The protein belongs to the prokaryotic/mitochondrial release factor family. Methylated by PrmC. Methylation increases the termination efficiency of RF1.

The protein localises to the cytoplasm. In terms of biological role, peptide chain release factor 1 directs the termination of translation in response to the peptide chain termination codons UAG and UAA. This Streptococcus pneumoniae (strain Taiwan19F-14) protein is Peptide chain release factor 1.